The chain runs to 380 residues: 4-hydroxy-3-methylbut-2-en-1-yl diphosphate synthase (flavodoxin) (380 aa).

[4Fe-4S] cluster-binding residues include Cys-273, Cys-276, Cys-308, and Glu-315.

This sequence belongs to the IspG family. The cofactor is [4Fe-4S] cluster.

It catalyses the reaction (2E)-4-hydroxy-3-methylbut-2-enyl diphosphate + oxidized [flavodoxin] + H2O + 2 H(+) = 2-C-methyl-D-erythritol 2,4-cyclic diphosphate + reduced [flavodoxin]. Its pathway is isoprenoid biosynthesis; isopentenyl diphosphate biosynthesis via DXP pathway; isopentenyl diphosphate from 1-deoxy-D-xylulose 5-phosphate: step 5/6. In terms of biological role, converts 2C-methyl-D-erythritol 2,4-cyclodiphosphate (ME-2,4cPP) into 1-hydroxy-2-methyl-2-(E)-butenyl 4-diphosphate. This chain is 4-hydroxy-3-methylbut-2-en-1-yl diphosphate synthase (flavodoxin), found in Leifsonia xyli subsp. xyli (strain CTCB07).